A 339-amino-acid polypeptide reads, in one-letter code: UDP-N-acetylenolpyruvoylglucosamine reductase (339 aa).

The FAD-binding PCMH-type domain occupies 16–188; it reads GIAATARYYS…LQVTLRLNKQ (173 aa). Arg164 is a catalytic residue. Ser238 serves as the catalytic Proton donor. The active site involves Glu334.

The protein belongs to the MurB family. Requires FAD as cofactor.

It is found in the cytoplasm. It carries out the reaction UDP-N-acetyl-alpha-D-muramate + NADP(+) = UDP-N-acetyl-3-O-(1-carboxyvinyl)-alpha-D-glucosamine + NADPH + H(+). It participates in cell wall biogenesis; peptidoglycan biosynthesis. In terms of biological role, cell wall formation. This chain is UDP-N-acetylenolpyruvoylglucosamine reductase, found in Amoebophilus asiaticus (strain 5a2).